The primary structure comprises 371 residues: Bifunctional enzyme IspD/IspF (371 aa).

The 2-C-methyl-D-erythritol 4-phosphate cytidylyltransferase stretch occupies residues 1–212 (MLDISLIMLG…CLIPPSNEHF (212 aa)). A 2-C-methyl-D-erythritol 2,4-cyclodiphosphate synthase region spans residues 212 to 371 (FTGIGFDAHE…ANLKYYDWTK (160 aa)). A divalent metal cation is bound by residues D218 and H220. 4-CDP-2-C-methyl-D-erythritol 2-phosphate contacts are provided by residues 218–220 (DAH) and 244–245 (HS). H252 is a binding site for a divalent metal cation. 4-CDP-2-C-methyl-D-erythritol 2-phosphate-binding positions include 266–268 (DIG), 271–275 (FPDTD), 342–345 (TTTE), F349, and R352.

In the N-terminal section; belongs to the IspD/TarI cytidylyltransferase family. IspD subfamily. It in the C-terminal section; belongs to the IspF family. The cofactor is a divalent metal cation.

The catalysed reaction is 2-C-methyl-D-erythritol 4-phosphate + CTP + H(+) = 4-CDP-2-C-methyl-D-erythritol + diphosphate. It carries out the reaction 4-CDP-2-C-methyl-D-erythritol 2-phosphate = 2-C-methyl-D-erythritol 2,4-cyclic diphosphate + CMP. It functions in the pathway isoprenoid biosynthesis; isopentenyl diphosphate biosynthesis via DXP pathway; isopentenyl diphosphate from 1-deoxy-D-xylulose 5-phosphate: step 2/6. It participates in isoprenoid biosynthesis; isopentenyl diphosphate biosynthesis via DXP pathway; isopentenyl diphosphate from 1-deoxy-D-xylulose 5-phosphate: step 4/6. Functionally, bifunctional enzyme that catalyzes the formation of 4-diphosphocytidyl-2-C-methyl-D-erythritol from CTP and 2-C-methyl-D-erythritol 4-phosphate (MEP) (IspD), and catalyzes the conversion of 4-diphosphocytidyl-2-C-methyl-D-erythritol 2-phosphate (CDP-ME2P) to 2-C-methyl-D-erythritol 2,4-cyclodiphosphate (ME-CPP) with a corresponding release of cytidine 5-monophosphate (CMP) (IspF). This Campylobacter curvus (strain 525.92) protein is Bifunctional enzyme IspD/IspF.